The chain runs to 37 residues: Cytochrome b6-f complex subunit 5 (37 aa).

Residues 5-25 (LLSGIVLGMITVSALGLFVAA) form a helical membrane-spanning segment.

It belongs to the PetG family. The 4 large subunits of the cytochrome b6-f complex are cytochrome b6, subunit IV (17 kDa polypeptide, PetD), cytochrome f and the Rieske protein, while the 4 small subunits are PetG, PetL, PetM and PetN. The complex functions as a dimer.

The protein localises to the plastid. It is found in the chloroplast thylakoid membrane. Component of the cytochrome b6-f complex, which mediates electron transfer between photosystem II (PSII) and photosystem I (PSI), cyclic electron flow around PSI, and state transitions. PetG is required for either the stability or assembly of the cytochrome b6-f complex. The protein is Cytochrome b6-f complex subunit 5 of Trieres chinensis (Marine centric diatom).